We begin with the raw amino-acid sequence, 251 residues long: Phosphate import ATP-binding protein PstB (251 aa).

Residues 5-246 form the ABC transporter domain; it reads IKIRGVNFFY…PRDKRTEDYI (242 aa). 37 to 44 is an ATP binding site; sequence GPSGCGKS.

Belongs to the ABC transporter superfamily. Phosphate importer (TC 3.A.1.7) family. The complex is composed of two ATP-binding proteins (PstB), two transmembrane proteins (PstC and PstA) and a solute-binding protein (PstS).

The protein localises to the cell membrane. The enzyme catalyses phosphate(out) + ATP + H2O = ADP + 2 phosphate(in) + H(+). Part of the ABC transporter complex PstSACB involved in phosphate import. Responsible for energy coupling to the transport system. The protein is Phosphate import ATP-binding protein PstB of Dehalococcoides mccartyi (strain CBDB1).